A 166-amino-acid polypeptide reads, in one-letter code: Cofilin-2 (166 aa).

One can recognise an ADF-H domain in the interval 4 to 153 (GVTVNDEVIK…KDRSTLGEKL (150 aa)). Ser-24 is subject to Phosphoserine. The Nuclear localization signal motif lies at 30–34 (KKRKK).

It belongs to the actin-binding proteins ADF family. The phosphorylation of Ser-24 may prevent recognition of the nuclear localization signal. As to expression, widely distributed in various tissues.

It is found in the nucleus matrix. The protein resides in the cytoplasm. The protein localises to the cytoskeleton. Controls reversibly actin polymerization and depolymerization in a pH-sensitive manner. It has the ability to bind G- and F-actin in a 1:1 ratio of cofilin to actin. It is the major component of intranuclear and cytoplasmic actin rods. This Gallus gallus (Chicken) protein is Cofilin-2 (CFL2).